A 243-amino-acid chain; its full sequence is UPF0502 protein Rmet_3697 (243 aa).

A compositionally biased stretch (low complexity) spans 1 to 11 (MTDTPDTPDTP). The disordered stretch occupies residues 1–23 (MTDTPDTPDTPMATGASSRPPLR).

Belongs to the UPF0502 family.

This Cupriavidus metallidurans (strain ATCC 43123 / DSM 2839 / NBRC 102507 / CH34) (Ralstonia metallidurans) protein is UPF0502 protein Rmet_3697.